The primary structure comprises 428 residues: Enolase (428 aa).

Q163 contacts (2R)-2-phosphoglycerate. E205 serves as the catalytic Proton donor. Positions 242, 285, and 312 each coordinate Mg(2+). (2R)-2-phosphoglycerate is bound by residues K337, R366, S367, and K388. The active-site Proton acceptor is K337.

This sequence belongs to the enolase family. It depends on Mg(2+) as a cofactor.

It is found in the cytoplasm. The protein resides in the secreted. It localises to the cell surface. The catalysed reaction is (2R)-2-phosphoglycerate = phosphoenolpyruvate + H2O. The protein operates within carbohydrate degradation; glycolysis; pyruvate from D-glyceraldehyde 3-phosphate: step 4/5. In terms of biological role, catalyzes the reversible conversion of 2-phosphoglycerate (2-PG) into phosphoenolpyruvate (PEP). It is essential for the degradation of carbohydrates via glycolysis. The sequence is that of Enolase from Neisseria gonorrhoeae (strain ATCC 700825 / FA 1090).